The sequence spans 112 residues: Colipase (112 aa).

A signal peptide spans 1–17 (MEKILILLLVALSVAYA). A propeptide spans 18–22 (APGPR) (enterostatin, activation peptide). 5 disulfide bridges follow: C34–C45, C40–C56, C44–C78, C66–C86, and C80–C104.

The protein belongs to the colipase family. In terms of assembly, forms a 1:1 stoichiometric complex with pancreatic lipase. Expressed by the pancreas.

It is found in the secreted. In terms of biological role, colipase is a cofactor of pancreatic lipase. It allows the lipase to anchor itself to the lipid-water interface. Without colipase the enzyme is washed off by bile salts, which have an inhibitory effect on the lipase. Its function is as follows. Enterostatin has a biological activity as a satiety signal. This is Colipase from Homo sapiens (Human).